Reading from the N-terminus, the 395-residue chain is 1-deoxy-D-xylulose 5-phosphate reductoisomerase (395 aa).

NADPH-binding residues include T10, G11, S12, I13, N38, and N123. 1-deoxy-D-xylulose 5-phosphate is bound at residue K124. E125 serves as a coordination point for NADPH. Residue D149 coordinates Mn(2+). Residues S150, E151, S185, and H208 each coordinate 1-deoxy-D-xylulose 5-phosphate. Position 151 (E151) interacts with Mn(2+). Residue G214 participates in NADPH binding. The 1-deoxy-D-xylulose 5-phosphate site is built by S221, N226, K227, and E230. E230 is a Mn(2+) binding site.

Belongs to the DXR family. Mg(2+) serves as cofactor. It depends on Mn(2+) as a cofactor.

The catalysed reaction is 2-C-methyl-D-erythritol 4-phosphate + NADP(+) = 1-deoxy-D-xylulose 5-phosphate + NADPH + H(+). The protein operates within isoprenoid biosynthesis; isopentenyl diphosphate biosynthesis via DXP pathway; isopentenyl diphosphate from 1-deoxy-D-xylulose 5-phosphate: step 1/6. In terms of biological role, catalyzes the NADPH-dependent rearrangement and reduction of 1-deoxy-D-xylulose-5-phosphate (DXP) to 2-C-methyl-D-erythritol 4-phosphate (MEP). The protein is 1-deoxy-D-xylulose 5-phosphate reductoisomerase of Shewanella woodyi (strain ATCC 51908 / MS32).